Here is a 228-residue protein sequence, read N- to C-terminus: Octanoyltransferase (228 aa).

Residues 37–217 enclose the BPL/LPL catalytic domain; sequence AGGPDTLLLL…AVCDALDGRL (181 aa). Substrate is bound by residues 75 to 82, 147 to 149, and 160 to 162; these read RGGKITWH, AIG, and GFA. Cys178 serves as the catalytic Acyl-thioester intermediate.

It belongs to the LipB family.

Its subcellular location is the cytoplasm. The catalysed reaction is octanoyl-[ACP] + L-lysyl-[protein] = N(6)-octanoyl-L-lysyl-[protein] + holo-[ACP] + H(+). It functions in the pathway protein modification; protein lipoylation via endogenous pathway; protein N(6)-(lipoyl)lysine from octanoyl-[acyl-carrier-protein]: step 1/2. In terms of biological role, catalyzes the transfer of endogenously produced octanoic acid from octanoyl-acyl-carrier-protein onto the lipoyl domains of lipoate-dependent enzymes. Lipoyl-ACP can also act as a substrate although octanoyl-ACP is likely to be the physiological substrate. The sequence is that of Octanoyltransferase from Mycolicibacterium smegmatis (strain ATCC 700084 / mc(2)155) (Mycobacterium smegmatis).